Here is a 118-residue protein sequence, read N- to C-terminus: Large ribosomal subunit protein uL22c (118 aa).

The protein belongs to the universal ribosomal protein uL22 family. Part of the 50S ribosomal subunit.

Its subcellular location is the plastid. The protein localises to the chloroplast. In terms of biological role, this protein binds specifically to 23S rRNA. Functionally, the globular domain of the protein is located near the polypeptide exit tunnel on the outside of the subunit, while an extended beta-hairpin is found that lines the wall of the exit tunnel in the center of the 70S ribosome. This is Large ribosomal subunit protein uL22c (rpl22) from Rhodomonas salina (Cryptomonas salina).